Here is a 480-residue protein sequence, read N- to C-terminus: ATP synthase subunit beta (480 aa).

158-165 (GGAGVGKT) contacts ATP.

The protein belongs to the ATPase alpha/beta chains family. F-type ATPases have 2 components, CF(1) - the catalytic core - and CF(0) - the membrane proton channel. CF(1) has five subunits: alpha(3), beta(3), gamma(1), delta(1), epsilon(1). CF(0) has three main subunits: a(1), b(2) and c(9-12). The alpha and beta chains form an alternating ring which encloses part of the gamma chain. CF(1) is attached to CF(0) by a central stalk formed by the gamma and epsilon chains, while a peripheral stalk is formed by the delta and b chains.

It localises to the cell inner membrane. It catalyses the reaction ATP + H2O + 4 H(+)(in) = ADP + phosphate + 5 H(+)(out). In terms of biological role, produces ATP from ADP in the presence of a proton gradient across the membrane. The catalytic sites are hosted primarily by the beta subunits. This Koribacter versatilis (strain Ellin345) protein is ATP synthase subunit beta.